A 438-amino-acid chain; its full sequence is 2-(3-amino-3-carboxypropyl)histidine synthase subunit 1 (438 aa).

Residues 7 to 29 (SGAAEQGGRDGPGRGRAPRGRVA) are disordered. [4Fe-4S] cluster contacts are provided by Cys-110, Cys-214, and Cys-342. Residues 391-421 (VNHGQDRRPHAPGRPARGKVQEGSARPPSAV) form a disordered region.

Belongs to the DPH1/DPH2 family. DPH1 subfamily. Component of the 2-(3-amino-3-carboxypropyl)histidine synthase complex composed of DPH1, DPH2, DPH3 and a NADH-dependent reductase. Interacts with DPH2. Interacts with RBM8A. Requires [4Fe-4S] cluster as cofactor. In terms of tissue distribution, expressed in heart, brain, placenta, lung, liver, skeletal muscle, kidney, pancreas, spleen, thymus, mammary gland, colon, small intestine, testis and ovary. Reduced expression in primary breast and ovarian tumors.

It localises to the nucleus. Its subcellular location is the cytoplasm. It catalyses the reaction L-histidyl-[translation elongation factor 2] + S-adenosyl-L-methionine = 2-[(3S)-amino-3-carboxypropyl]-L-histidyl-[translation elongation factor 2] + S-methyl-5'-thioadenosine + H(+). It functions in the pathway protein modification; peptidyl-diphthamide biosynthesis. In terms of biological role, catalyzes the first step of diphthamide biosynthesis, a post-translational modification of histidine which occurs in elongation factor 2. DPH1 and DPH2 transfer a 3-amino-3-carboxypropyl (ACP) group from S-adenosyl-L-methionine (SAM) to a histidine residue, the reaction is assisted by a reduction system comprising DPH3 and a NADH-dependent reductase. Acts as a tumor suppressor. This Homo sapiens (Human) protein is 2-(3-amino-3-carboxypropyl)histidine synthase subunit 1.